A 337-amino-acid polypeptide reads, in one-letter code: Nucleoid-associated protein HSM_0096 (337 aa).

Belongs to the YejK family.

The protein localises to the cytoplasm. It localises to the nucleoid. In Histophilus somni (strain 2336) (Haemophilus somnus), this protein is Nucleoid-associated protein HSM_0096.